The following is a 68-amino-acid chain: Conotoxin mr3g (68 aa).

Residues 1–19 (MSKLGVLLTICLLLFALTA) form the signal peptide. Residues 20–51 (VPLDGDQPADRPAERMQDDISSERHPMFDAVR) constitute a propeptide that is removed on maturation. 3 cysteine pairs are disulfide-bonded: Cys-53-Cys-67, Cys-54-Cys-63, and Cys-59-Cys-66. 4-hydroxyproline is present on residues Pro-55 and Pro-65. At Cys-67 the chain carries Cysteine amide.

Expressed by the venom duct.

The protein resides in the secreted. In terms of biological role, intracranially injection into mice does not elicit symptoms. The sequence is that of Conotoxin mr3g from Conus marmoreus (Marble cone).